A 159-amino-acid chain; its full sequence is Capsid protein (159 aa).

S2 is subject to N-acetylserine; by host.

Belongs to the virgaviridae capsid protein family.

It is found in the virion. Its function is as follows. Capsid protein self-assembles to form rod-shaped virions about 18 nm in diameter with a central canal enclosing the viral genomic RNA. The chain is Capsid protein (CP) from Tobacco mosaic virus (strain Rakkyo) (TMV-R).